A 1482-amino-acid chain; its full sequence is Glutamate receptor ionotropic, NMDA 2B (1482 aa).

The signal sequence occupies residues 1–26 (MKPSAECCSPKFWLVLAVLAVSGSKA). Residues 27–557 (RSQKSPPSIG…SAFLEPFSAD (531 aa)) lie on the Extracellular side of the membrane. A glycan (N-linked (GlcNAc...) asparagine) is linked at N74. C86 and C321 are disulfide-bonded. 2 residues coordinate Zn(2+): H127 and E284. 4 N-linked (GlcNAc...) asparagine glycosylation sites follow: N341, N348, N444, and N491. Intrachain disulfides connect C429/C456 and C436/C457. 2 residues coordinate L-glutamate: T514 and R519. A glycan (N-linked (GlcNAc...) asparagine) is linked at N542. The chain crosses the membrane as a helical span at residues 558-576 (VWVMMFVMLLIVSAVAVFV). Residues 577–603 (FEYFSPVGYNRCLADGREPGGPSFTIG) lie on the Cytoplasmic side of the membrane. An intramembrane region (discontinuously helical) is located at residues 604-623 (KAIWLLWGLVFNNSVPVQNP). Positions 604-623 (KAIWLLWGLVFNNSVPVQNP) are pore-forming. Topologically, residues 624 to 630 (KGTTSKI) are cytoplasmic. Residues 631–646 (MVSVWAFFAVIFLASY) traverse the membrane as a helical segment. At 647–817 (TANLAAFMIQ…VMSSQLDIDN (171 aa)) the chain is on the extracellular side. An N-linked (GlcNAc...) asparagine glycan is attached at N688. S690, T691, and D732 together coordinate L-glutamate. C746 and C801 are oxidised to a cystine. The chain crosses the membrane as a helical span at residues 818-837 (MAGVFYMLGAAMALSLITFI). At 838-1482 (CEHLFYWQFR…EKLSSIESDV (645 aa)) the chain is on the cytoplasmic side. A phosphoserine mark is found at S882, S886, S917, and S920. Y962 and Y1039 each carry phosphotyrosine. S1058, S1061, and S1064 each carry phosphoserine. Phosphotyrosine is present on residues Y1109 and Y1133. At S1143 the chain carries Phosphoserine. Y1155 bears the Phosphotyrosine mark. Residues 1161 to 1194 (DFKRDSVSGGGPCTNRSHLKHGTGEKHGVVGGVP) form a disordered region. A phosphoserine mark is found at S1255 and S1259. The disordered stretch occupies residues 1269 to 1301 (PVAVTSNASSTKYPQSPTNSKAQKKNRNKLRRQ). Residues 1272–1289 (VTSNASSTKYPQSPTNSK) are compositionally biased toward polar residues. A compositionally biased stretch (basic residues) spans 1290–1301 (AQKKNRNKLRRQ). The interaction with DAPK1 stretch occupies residues 1292–1304 (KKNRNKLRRQHSY). S1303 carries the phosphoserine modification. The residue at position 1472 (Y1472) is a Phosphotyrosine. A PDZ-binding motif is present at residues 1480–1482 (SDV).

Belongs to the glutamate-gated ion channel (TC 1.A.10.1) family. NR2B/GRIN2B subfamily. In terms of assembly, heterotetramer. Forms heterotetrameric channels composed of two GluN1/zeta subunits (GRIN1), and two identical GluN2/epsilon subunits (GRIN2A, GRIN2B, GRIN2C or GRIN2D) or GluN3 subunits (GRIN3A or GRIN3B) (in vitro). Can also form heterotetrameric channels that contain at least two GluN1 subunits and at least two different GluN2 subunits (or a combination of one GluN2 and one GluN3 subunits) (in vitro). In vivo, the subunit composition may depend on the expression levels of the different subunits. Found in a complex with GRIN1, GRIN3A and PPP2CB. Found in a complex with GRIN1 and GRIN3B. Interacts with MAGI3. Interacts with HIP1 and NETO1. Interacts with PDZ domains of PATJ, DLG3 and DLG4. Interacts with DAPK1. Found in a complex with GRIN1 and PRR7. Interacts with PRR7. Interacts with CAMK2A. Interacts with ARC; preventing ARC oligomerization. Interacts with TMEM25. Interacts (via the extreme C-terminus) with FRMPD2 (via the second PDZ domain); the interaction is direct and is likely to promote NMDAR-mediated neural signal transmission. Interacts with FAM81A; the interaction facilitates condensate formation via liquid-liquid phase separation. In terms of processing, phosphorylated on tyrosine residues. Phosphorylation at Ser-1303 by DAPK1 enhances synaptic NMDA receptor channel activity. Expressed in the hippocampus including the dentate gyrus (at protein level). Detected in adult olfactory bulb, brain cortex, hippocampus, striatum, thalamus, superior colliculus, with much lower levels in inferior colliculus, midbrain and cerebellum.

Its subcellular location is the cell membrane. The protein resides in the postsynaptic cell membrane. The protein localises to the late endosome. It is found in the lysosome. It localises to the cytoplasm. Its subcellular location is the cytoskeleton. It catalyses the reaction Ca(2+)(in) = Ca(2+)(out). The catalysed reaction is Na(+)(in) = Na(+)(out). It carries out the reaction K(+)(in) = K(+)(out). NMDA glutamate receptor activity is inhibited by micromolar levels of zinc ions. NMDA glutamate receptor activity is inhibited by ifenprodil. Its function is as follows. Component of N-methyl-D-aspartate (NMDA) receptors (NMDARs) that function as heterotetrameric, ligand-gated cation channels with high calcium permeability and voltage-dependent block by Mg(2+). Participates in synaptic plasticity for learning and memory formation by contributing to the long-term depression (LTD) of hippocampus membrane currents. Channel activation requires binding of the neurotransmitter L-glutamate to the GluN2 subunit, glycine or D-serine binding to the GluN1 subunit, plus membrane depolarization to eliminate channel inhibition by Mg(2+). NMDARs mediate simultaneously the potasium efflux and the influx of calcium and sodium. Each GluN2 subunit confers differential attributes to channel properties, including activation, deactivation and desensitization kinetics, pH sensitivity, Ca2(+) permeability, and binding to allosteric modulators. In concert with DAPK1 at extrasynaptic sites, acts as a central mediator for stroke damage. Its phosphorylation at Ser-1303 by DAPK1 enhances synaptic NMDA receptor channel activity inducing injurious Ca2+ influx through them, resulting in an irreversible neuronal death. The sequence is that of Glutamate receptor ionotropic, NMDA 2B from Rattus norvegicus (Rat).